Consider the following 100-residue polypeptide: Urease subunit gamma (100 aa).

Belongs to the urease gamma subunit family. Heterotrimer of UreA (gamma), UreB (beta) and UreC (alpha) subunits. Three heterotrimers associate to form the active enzyme.

It localises to the cytoplasm. The enzyme catalyses urea + 2 H2O + H(+) = hydrogencarbonate + 2 NH4(+). The protein operates within nitrogen metabolism; urea degradation; CO(2) and NH(3) from urea (urease route): step 1/1. This Rhizobium etli (strain CIAT 652) protein is Urease subunit gamma.